Consider the following 289-residue polypeptide: 33 kDa chaperonin (289 aa).

Cystine bridges form between Cys-225/Cys-227 and Cys-258/Cys-261.

This sequence belongs to the HSP33 family. In terms of processing, under oxidizing conditions two disulfide bonds are formed involving the reactive cysteines. Under reducing conditions zinc is bound to the reactive cysteines and the protein is inactive.

Its subcellular location is the cytoplasm. In terms of biological role, redox regulated molecular chaperone. Protects both thermally unfolding and oxidatively damaged proteins from irreversible aggregation. Plays an important role in the bacterial defense system toward oxidative stress. In Nitrosococcus oceani (strain ATCC 19707 / BCRC 17464 / JCM 30415 / NCIMB 11848 / C-107), this protein is 33 kDa chaperonin.